A 569-amino-acid chain; its full sequence is Protein germ cell-less (569 aa).

Positions serine 17 to proline 43 are disordered. Positions serine 66–serine 136 constitute a BTB domain. The tract at residues glycine 517–isoleucine 553 is disordered.

The protein resides in the cytoplasm. Its function is as follows. Required for the specification of pole cells and germ cell formation. Mothers with reduced glc function give rise to sterile adult progeny that lack germ cells. This Drosophila melanogaster (Fruit fly) protein is Protein germ cell-less (gcl).